The primary structure comprises 93 residues: UPF0058 protein AF_0738 (93 aa).

Belongs to the UPF0058 family.

The polypeptide is UPF0058 protein AF_0738 (Archaeoglobus fulgidus (strain ATCC 49558 / DSM 4304 / JCM 9628 / NBRC 100126 / VC-16)).